The primary structure comprises 152 residues: UPF0266 membrane protein KPK_1957 (152 aa).

3 helical membrane passes run 6 to 26 (LVII…QFIM), 45 to 65 (VDGL…ITQH), and 67 to 87 (TPIT…LFWI).

Belongs to the UPF0266 family.

The protein resides in the cell inner membrane. The polypeptide is UPF0266 membrane protein KPK_1957 (Klebsiella pneumoniae (strain 342)).